We begin with the raw amino-acid sequence, 230 residues long: Interleukin-6 (230 aa).

The signal sequence occupies residues 1–24; that stretch reads MASKHNADLSSAAMLAALLLCALG. Cysteines 96 and 106 form a disulfide. An N-linked (GlcNAc...) asparagine glycan is attached at asparagine 100. Over residues 206–218 the composition is skewed to basic and acidic residues; it reads REMPKQKRRKDDG. The segment at 206–230 is disordered; sequence REMPKQKRRKDDGIIPPIHPSYQMT.

It belongs to the IL-6 superfamily. Component of a hexamer of two molecules each of IL6, IL6R and IL6ST; first binds to IL6R to associate with the signaling subunit IL6ST. In terms of tissue distribution, expressed in kidney and spleen. Low expression in liver and gills.

The protein localises to the secreted. Functionally, cytokine with a wide variety of biological functions in immunity, tissue regeneration, and metabolism. Binds to IL6R, then the complex associates to the signaling subunit IL6ST/gp130 to trigger the intracellular IL6-signaling pathway. The interaction with the membrane-bound IL6R and IL6ST stimulates 'classic signaling', whereas the binding of IL6 and soluble IL6R to IL6ST stimulates 'trans-signaling'. Alternatively, 'cluster signaling' occurs when membrane-bound IL6:IL6R complexes on transmitter cells activate IL6ST receptors on neighboring receiver cells. This Paralichthys olivaceus (Bastard halibut) protein is Interleukin-6 (il6).